The chain runs to 489 residues: Occludin (489 aa).

At 1–51 (MMYEKRSYTGYGHPSSHYDYPPPSGPPGSFYLADVPPQHFYQWRSPPGIVR) the chain is on the cytoplasmic side. Positions 45-248 (SPPGIVRILQ…ICYFAQKTRH (204 aa)) constitute an MARVEL domain. A helical transmembrane segment spans residues 52–74 (ILQGSVVILCLVIFACVASTLAW). Residues 75-112 (EYYGSGGLLGYGGGLGSYYNGYYGGYNGYYYGGLTNPR) are Extracellular-facing. Residues 113–137 (AANGFMIAMAVLCFLVTLGLVIAGL) traverse the membrane as a helical segment. Over 138–147 (SKASGARSRR) the chain is Cytoplasmic. A helical membrane pass occupies residues 148–172 (FYLLVAVLSGLLAFVMLIASIVYVV). Residues 173–222 (GVNPRAGLGASSGSLYYNQMLMLCNQMMSPVAGGIMNQYLYHYCMVDPQE) are Extracellular-facing. An intrachain disulfide couples C196 to C216. Residues 223–244 (AVAIVCGFLTVILLCVICYFAQ) form a helical membrane-spanning segment. Residues 245–489 (KTRHKIWKYG…MVGGYDQSRS (245 aa)) are Cytoplasmic-facing. Phosphoserine is present on S280. Phosphothreonine is present on T285. At S300 the chain carries Phosphoserine. Positions 308-382 (PAQENGYGHS…ESSGEQNRDD (75 aa)) are disordered. The segment covering 322–332 (PSVPPPEGPSP) has biased composition (pro residues). Basic residues predominate over residues 345–354 (PARRGHRQRP). Phosphotyrosine is present on residues Y364 and Y368. A compositionally biased stretch (polar residues) spans 365–377 (ETDYTTAAESSGE). Phosphothreonine; by PKC/PRKCH occurs at positions 369 and 370. S374 is modified (phosphoserine). The OCEL domain maps to 381–489 (DDWASLYPPI…MVGGYDQSRS (109 aa)). Residues 407–434 (LQRYKALCAEMDDIGTQLRQLSHELDCL) adopt a coiled-coil conformation. S457 carries the post-translational modification Phosphoserine.

The protein belongs to the ELL/occludin family. As to quaternary structure, interacts with TJP1/ZO1. Interacts with VAPA. Interacts with CLDN1, CLDN6, CLDN9, CLDN11, CLDN12 and CLDN17. Interacts with PLSCR1. Interacts with LSR, ILDR1 and ILDR2. Interacts with TJP2/ZO2. Dephosphorylated by PTPRJ. In terms of tissue distribution, localized at tight junctions of both epithelial and endothelial cells.

It localises to the cell membrane. The protein localises to the cell junction. It is found in the tight junction. May play a role in the formation and regulation of the tight junction (TJ) paracellular permeability barrier. This chain is Occludin (OCLN), found in Potorous tridactylus (Potoroo).